Consider the following 281-residue polypeptide: sn-glycerol-3-phosphate transport system permease protein UgpE (281 aa).

The next 6 helical transmembrane spans lie at 16 to 36 (LILG…AATL), 85 to 105 (FSIT…IVWF), 113 to 133 (FFWM…FPTV), 142 to 162 (LDSY…TFLF), 202 to 222 (ALFV…LLII), and 247 to 267 (WNQV…IVLA). Residues 77-268 (MLNSFIMAFS…IPPVVIVLAM (192 aa)) enclose the ABC transmembrane type-1 domain.

Belongs to the binding-protein-dependent transport system permease family. UgpAE subfamily. The complex is composed of two ATP-binding proteins (UgpC), two transmembrane proteins (UgpA and UgpE) and a solute-binding protein (UgpB).

Its subcellular location is the cell inner membrane. Its function is as follows. Part of the ABC transporter complex UgpBAEC involved in sn-glycerol-3-phosphate (G3P) import. Probably responsible for the translocation of the substrate across the membrane. The sequence is that of sn-glycerol-3-phosphate transport system permease protein UgpE (ugpE) from Salmonella choleraesuis (strain SC-B67).